Consider the following 168-residue polypeptide: Vitelline membrane protein Vm26Ab (168 aa).

An N-terminal signal peptide occupies residues 1-23 (MAFNFGHLLIAGLVALSAVSSET). The propeptide at 24–42 (IQLQPTQGILIPAPLAENI) is removed between stage 11 and 14 of oogenesis. The segment at 43–46 (RVSR) is essential for N-terminal propeptide removal. Potential serine protease cleavage site. The 8 X 8 AA approximate repeats of P-[AS]-Y-S-A-P-A-[AS] stretch occupies residues 52-119 (YGAAPAAPSY…PAYSAPASIP (68 aa)). The stretch at 55–58 (APAA) is one 1; half-length repeat. Repeat 2 spans residues 59-66 (PSYSAPAA). The stretch at 70 to 77 (QAYSAPAA) is one 3; approximate repeat. Repeat copies occupy residues 78 to 85 (PAYSAPAA), 86 to 93 (PAYSAPAA), 94 to 101 (PAYSAPAA), 102 to 109 (PAYSAPAA), and 110 to 117 (PAYSAPAS). The region spanning 117 to 154 (SIPSPPCPKNYLFSCQPSLQPVPCSAPAQSYGSAGAYS) is the VM domain. Residues 155–168 (QYVPQYAVPFVREL) constitute a propeptide, removed between stage 9 and 12 of oogenesis.

This sequence belongs to the vitelline membrane protein family. Interacts with vml and Vm26Aa; forms part of a disulfide-linked network within the vitelline membrane of stage 10 egg chambers. Post-translationally, proteolytically processed after secretion into the perivitelline space. Undergoes several proteolytic processing steps during formation of the vitelline membrane; an initial processing step removing a C-terminal propeptide occurs between stage 9 and 12 of oogenesis while a second removing a N-terminal propeptide occurs between stage 11 and 14. Becomes part of a disulfide-linked network including other vitelline membrane proteins, including vml and Vm26Aa, during vitelline membrane biogenesis and maturation. Cys-123, Cys-131 and Cys-140 are involved in disulfide network formation, with Cys-131 being the most important. Undergoes both disulfide and non-disulfide cross-linking upon incorporation into the vitelline membrane. As to expression, follicle cells.

It is found in the secreted. It localises to the extracellular space. Its subcellular location is the extracellular matrix. Functionally, major early eggshell protein secreted by follicle cells into the perivitelline space and incorporated into the vitelline membrane. Involved in vitelline membrane biogenesis; forms a cross-linked network with other vitelline membrane components. This is Vitelline membrane protein Vm26Ab from Drosophila melanogaster (Fruit fly).